A 152-amino-acid polypeptide reads, in one-letter code: uncharacterized protein (152 aa).

It localises to the mitochondrion. This is an uncharacterized protein from Arabidopsis thaliana (Mouse-ear cress).